Consider the following 132-residue polypeptide: Dinoflagellate viral nucleoprotein 5 (132 aa).

Residues Met1–Lys44 show a composition bias toward basic residues. The interval Met1–Ile84 is disordered. Over residues Gly57–Lys66 the composition is skewed to polar residues.

In terms of processing, phosphorylated.

It localises to the nucleus. Its subcellular location is the chromosome. Functionally, DNA-binding protein, which similarly to histones, may compact DNA into chromatin. This Hematodinium sp protein is Dinoflagellate viral nucleoprotein 5.